An 878-amino-acid chain; its full sequence is E3 ubiquitin-protein ligase SH3RF3 (878 aa).

The segment at 19 to 40 is disordered; the sequence is RGEGEDRQGEQQRGAQARTEED. Residues 52-93 form an RING-type zinc finger; sequence CSVCLERLDTTAKVLPCQHTFCRRCLESIVCSRHELRCPECR. Residues 120-145 form a disordered region; it reads PRTGASPGSSPPARPGPGTFSALAGG. SH3 domains lie at 187–246 and 249–312; these read SQLP…CVRP and QALP…LNDS. An interaction with RAC1 region spans residues 364-433; sequence RVDSKKNAKK…TVPTQDSSSA (70 aa). At Ser395 the chain carries Phosphoserine. The SH3 3 domain maps to 458 to 519; the sequence is LPLNVYLALY…PGNYVTPVSR (62 aa). Disordered regions lie at residues 574–659 and 688–758; these read QHPA…CPRP and PISG…MGPE. 4 stretches are compositionally biased toward polar residues: residues 590–609, 618–633, 643–653, and 690–699; these read AQPT…THAS, ATVS…SRLP, ASPQHGQQSPA, and SGLSTPSLIN. The span at 703–716 shows a compositional bias: basic and acidic residues; sequence KPDDKKNEKKEKKS. The segment covering 741–752 has biased composition (polar residues); sequence HDPQSAMDTSLQ. Ser792 carries the post-translational modification Phosphoserine. The SH3 4 domain occupies 819–878; it reads LPRERYRVVVSYPPQSEAEIELKEGDIVFVHKKHEDGWFKGTLQRNGRTGLFPGSFVESF.

This sequence belongs to the SH3RF family. Interacts (via SH3 domain 3) with PAK2. Interacts with RAC1 (GTP-bound form). Post-translationally, autoubiquitinated.

The enzyme catalyses S-ubiquitinyl-[E2 ubiquitin-conjugating enzyme]-L-cysteine + [acceptor protein]-L-lysine = [E2 ubiquitin-conjugating enzyme]-L-cysteine + N(6)-ubiquitinyl-[acceptor protein]-L-lysine.. Its pathway is protein modification; protein ubiquitination. Functionally, has E3 ubiquitin-protein ligase activity. The protein is E3 ubiquitin-protein ligase SH3RF3 (Sh3rf3) of Mus musculus (Mouse).